A 159-amino-acid polypeptide reads, in one-letter code: Urease accessory protein UreE (159 aa).

The tract at residues 140–159 (GAYHGTGHHHHGHGHDPHHG) is disordered.

It belongs to the UreE family.

It is found in the cytoplasm. Functionally, involved in urease metallocenter assembly. Binds nickel. Probably functions as a nickel donor during metallocenter assembly. The chain is Urease accessory protein UreE from Sinorhizobium fredii (strain NBRC 101917 / NGR234).